Consider the following 542-residue polypeptide: MLDILRFVLICGILWILRRVLLRVFIHSPLDKIPGPPPVSFAKGNLPQLYDRNGWDFIKGLGEKYGGVVKINGLYGAKMLFVFDPAALSSVVVKDQYVYERSEDATKSTRLMLGDGLLTSQGETHRKQRKLMNPVFSINHMRDMMPIFYQISRNLRDAIASRIDNGEKEIDVLDWMARTALELVGQAGLGYSFDPLVQDKADAYAEAIKALVPTAFGLRLYRPLLPIALKIGTPAIRRRILKLIPSTRLQRMREISDAIDAHSKRIFEEKKQALARGDEAVLKQVGAGKDILSRLMQANMTASEEDRLPENELLGQMSTFIFAGMDTTSGALAHTLQLLAEHPDVQDKMRAEIVAALGGGQEIPYDTLVDLPYLDAVCRETLRLYAPVTTVNRTAQEDIVLPLSEPIRGTDGNLIQEIPVPKGTEVIVGILASNRNPALWGPDAAEWKPERWLEPLPDTINTARVPGVYSHLMTFLGGGRACIGFKFSQLEMKVVLAVLLSSFKFSLSSKEIVWNVAGIQYPTVGASGKPEMPMKIDRVKNT.

A signal peptide spans 1-22 (MLDILRFVLICGILWILRRVLL). 2 N-linked (GlcNAc...) asparagine glycosylation sites follow: Asn299 and Asn392. Residue Cys482 participates in heme binding.

Belongs to the cytochrome P450 family. Heme is required as a cofactor.

It participates in secondary metabolite biosynthesis. Functionally, cytochrome P450 monooxygenase that is able to use dehydroabietic acid as a substrate for oxidation. This is Cytochrome P450 monooxygenase 91 from Postia placenta (strain ATCC 44394 / Madison 698-R) (Brown rot fungus).